The following is a 440-amino-acid chain: 5-methylthioadenosine/S-adenosylhomocysteine deaminase (440 aa).

His-69 and His-71 together coordinate Zn(2+). Substrate-binding residues include Glu-98 and His-190. His-217 lines the Zn(2+) pocket. Substrate contacts are provided by Glu-220 and Asp-305. A Zn(2+)-binding site is contributed by Asp-305.

Belongs to the metallo-dependent hydrolases superfamily. MTA/SAH deaminase family. Zn(2+) serves as cofactor.

It carries out the reaction S-adenosyl-L-homocysteine + H2O + H(+) = S-inosyl-L-homocysteine + NH4(+). The enzyme catalyses S-methyl-5'-thioadenosine + H2O + H(+) = S-methyl-5'-thioinosine + NH4(+). Functionally, catalyzes the deamination of 5-methylthioadenosine and S-adenosyl-L-homocysteine into 5-methylthioinosine and S-inosyl-L-homocysteine, respectively. Is also able to deaminate adenosine. This chain is 5-methylthioadenosine/S-adenosylhomocysteine deaminase, found in Desulfovibrio desulfuricans (strain ATCC 27774 / DSM 6949 / MB).